Consider the following 411-residue polypeptide: G1/S-specific cyclin pas1 (411 aa).

2 disordered regions span residues 210–253 (LKNQ…PSVL) and 307–326 (SLSKPVSLPPTPSSPKVGVY). Residues 218-252 (PSSSPQTTQDSSPILTMAPSTPVSVGSTPPSTPSV) are compositionally biased toward low complexity.

This sequence belongs to the cyclin family.

Its function is as follows. Essential for the control of the cell cycle at the G1/S (start) transition. Interacts with the pef1 protein kinase. The pef1/pas1 complex activates the res2/cdc10 complex. In Schizosaccharomyces pombe (strain 972 / ATCC 24843) (Fission yeast), this protein is G1/S-specific cyclin pas1 (pas1).